The primary structure comprises 254 residues: Alcohol dehydrogenase (254 aa).

10–33 (FVAGLGGIGLDTSREIVKSGPKNL) provides a ligand contact to NAD(+). Ser138 serves as a coordination point for substrate. The active-site Proton acceptor is the Tyr151.

It belongs to the short-chain dehydrogenases/reductases (SDR) family. In terms of assembly, homodimer.

It carries out the reaction a primary alcohol + NAD(+) = an aldehyde + NADH + H(+). The enzyme catalyses a secondary alcohol + NAD(+) = a ketone + NADH + H(+). In Drosophila mimica (Fruit fly), this protein is Alcohol dehydrogenase (Adh).